We begin with the raw amino-acid sequence, 459 residues long: Phosphomethylpyrimidine synthase (459 aa).

Residues asparagine 80, methionine 109, tyrosine 139, histidine 175, 195 to 197 (SRG), 236 to 239 (DSLR), and glutamate 275 contribute to the substrate site. Histidine 279 lines the Zn(2+) pocket. Residue tyrosine 302 coordinates substrate. Histidine 343 is a Zn(2+) binding site. Residues cysteine 423, cysteine 426, and cysteine 431 each coordinate [4Fe-4S] cluster.

Belongs to the ThiC family. Requires [4Fe-4S] cluster as cofactor.

The catalysed reaction is 5-amino-1-(5-phospho-beta-D-ribosyl)imidazole + S-adenosyl-L-methionine = 4-amino-2-methyl-5-(phosphooxymethyl)pyrimidine + CO + 5'-deoxyadenosine + formate + L-methionine + 3 H(+). It participates in cofactor biosynthesis; thiamine diphosphate biosynthesis. Its function is as follows. Catalyzes the synthesis of the hydroxymethylpyrimidine phosphate (HMP-P) moiety of thiamine from aminoimidazole ribotide (AIR) in a radical S-adenosyl-L-methionine (SAM)-dependent reaction. In Prochlorococcus marinus (strain MIT 9211), this protein is Phosphomethylpyrimidine synthase.